The primary structure comprises 324 residues: Adenine deaminase (324 aa).

Zn(2+) contacts are provided by histidine 11, histidine 13, and histidine 189. Residue glutamate 192 is the Proton donor of the active site. Aspartate 270 is a Zn(2+) binding site. Substrate is bound at residue aspartate 271.

This sequence belongs to the metallo-dependent hydrolases superfamily. Adenosine and AMP deaminases family. Adenine deaminase type 2 subfamily. Zn(2+) serves as cofactor.

The catalysed reaction is adenine + H2O + H(+) = hypoxanthine + NH4(+). Catalyzes the hydrolytic deamination of adenine to hypoxanthine. Plays an important role in the purine salvage pathway and in nitrogen catabolism. This chain is Adenine deaminase, found in Sinorhizobium fredii (strain NBRC 101917 / NGR234).